Here is a 628-residue protein sequence, read N- to C-terminus: Nuclear RNA export factor 1 (628 aa).

Residues 47-83 (DTQSRYEDDDEPAVPVRASLTSASSRGRGGSSRGFGQ) form a disordered region. Residues 63–72 (RASLTSASSR) are compositionally biased toward low complexity. One can recognise an RRM domain in the interval 100-179 (YKCRATGAAK…EFYTSKVPAP (80 aa)). 2 LRR repeats span residues 245–270 (NIVA…SIAK) and 271–294 (FVME…FAGL). In terms of domain architecture, NTF2 spans 365–526 (LVEQFVTSYF…VAVISDQLFI (162 aa)). A TAP-C domain is found at 576–628 (PIREEMIKAMCQFSGMIPPFSEKCLADCAWNFDFACQKFNEIKSSVPAEAFAH).

It belongs to the NXF family. As to quaternary structure, interacts with nucleoporins, Nup98, Nup153 and Nup214.

It is found in the nucleus. In terms of biological role, involved in RNA export from the nucleus to the cytoplasm. This Caenorhabditis elegans protein is Nuclear RNA export factor 1 (nxf-1).